The following is a 144-amino-acid chain: Superoxide dismutase [Mn], mitochondrial (144 aa).

Mn(2+)-binding residues include His-10, His-58, and Asp-143.

The protein belongs to the iron/manganese superoxide dismutase family. Homotetramer. Mn(2+) is required as a cofactor.

The protein localises to the mitochondrion matrix. The enzyme catalyses 2 superoxide + 2 H(+) = H2O2 + O2. Its function is as follows. Destroys superoxide anion radicals which are normally produced within the cells and which are toxic to biological systems. This Apostichopus californicus (California sea cucumber) protein is Superoxide dismutase [Mn], mitochondrial.